The following is a 295-amino-acid chain: Probable alpha-L-glutamate ligase (295 aa).

Residues 104–287 (HQLLAAQGID…VAGAIVQHLE (184 aa)) enclose the ATP-grasp domain. ATP-binding positions include K141, 178–179 (EF), D187, and 211–213 (RSN). Residues D248, E260, and N262 each contribute to the Mg(2+) site. Residues D248, E260, and N262 each coordinate Mn(2+).

This sequence belongs to the RimK family. Requires Mg(2+) as cofactor. It depends on Mn(2+) as a cofactor.

The polypeptide is Probable alpha-L-glutamate ligase (Xanthomonas oryzae pv. oryzae (strain MAFF 311018)).